A 148-amino-acid polypeptide reads, in one-letter code: Putative antiporter subunit mnhG2 (148 aa).

A run of 3 helical transmembrane segments spans residues 11-31 (IAAI…IGLI), 51-71 (VLLT…YLSV), and 72-92 (RLIL…HLIS). The interval 125 to 148 (EQLKQRAHEREERRRKTYEKEHDY) is disordered. Residues 127–148 (LKQRAHEREERRRKTYEKEHDY) show a composition bias toward basic and acidic residues.

Belongs to the CPA3 antiporters (TC 2.A.63) subunit G family. May form a heterooligomeric complex that consists of seven subunits: mnhA2, mnhB2, mnhC2, mnhD2, mnhE2, mnhF2 and mnhG2.

It is found in the cell membrane. The sequence is that of Putative antiporter subunit mnhG2 (mnhG2) from Staphylococcus saprophyticus subsp. saprophyticus (strain ATCC 15305 / DSM 20229 / NCIMB 8711 / NCTC 7292 / S-41).